The sequence spans 654 residues: MTHITESEMKQKYLDLLSQKFDSAEKLATEIINLESILELPKGTEHFVSDLHGEYESFQHVLRNGSGNVRAKINDIFKDKLSQQEINDLAALVYYPEEKLKLVKNNFDSIGTLNIWYITTIQRLIDLITYCSSKYTRSKLRKALPEQYVYIIEELLYKSNEFHNKKPYYETLVNQIIELEQSDDLIIGLSYTVQRLVVDHLHVVGDIYDRGPKPDKIMDTLINYHSVDIQWGNHDVLWIGAYAGSKVCLANLLRICARYDNLDIIEDAYGINLRPLLTLAEKYYDAENPAFKPKKRPDKDVSLTKREESQITKIHQAIAMIQFKLEMPIIKRRPSFEMEERLVLEKIDYDNNEITIYNKTYPLKDTCFQTVNPNNPAELLAEEKEVMDKLLLSFQQSEKLRRHMSFLMRKGKLYLPYNGNLLIHGCIPVDENGEMESFEIEGERLSGRELLDVFEYHVRRAFDHKESTEDISTDLVWYLWTGKYSSLFGKRAMTTFERYFIEDKASHKEEKNPYYYLREDVDMIRKMLKDFGLNPDEGRIINGHTPVKEIDGEDPIKANGKMLVIDGGFSKAYQSTTGIAGYTLLYNSFGMQLVAHKEFNRKEKVLSMGADELSVKRVVDEELQRKKIRDTNIGKQLQDQIDILKILMHDRYLT.

Belongs to the FBPase class 3 family. Mn(2+) is required as a cofactor.

The enzyme catalyses beta-D-fructose 1,6-bisphosphate + H2O = beta-D-fructose 6-phosphate + phosphate. It functions in the pathway carbohydrate biosynthesis; gluconeogenesis. This is Fructose-1,6-bisphosphatase class 3 from Staphylococcus epidermidis (strain ATCC 35984 / DSM 28319 / BCRC 17069 / CCUG 31568 / BM 3577 / RP62A).